A 239-amino-acid chain; its full sequence is Large ribosomal subunit protein uL2 (239 aa).

The tract at residues 202-239 (HGGGSHQHVGRPSTVARNTPPGRKVGHIAARRTGRRKG) is disordered. Residues 225 to 239 (KVGHIAARRTGRRKG) are compositionally biased toward basic residues.

This sequence belongs to the universal ribosomal protein uL2 family. In terms of assembly, part of the 50S ribosomal subunit. Forms a bridge to the 30S subunit in the 70S ribosome.

Functionally, one of the primary rRNA binding proteins. Required for association of the 30S and 50S subunits to form the 70S ribosome, for tRNA binding and peptide bond formation. It has been suggested to have peptidyltransferase activity; this is somewhat controversial. Makes several contacts with the 16S rRNA in the 70S ribosome. The polypeptide is Large ribosomal subunit protein uL2 (Desulfurococcus amylolyticus (strain DSM 18924 / JCM 16383 / VKM B-2413 / 1221n) (Desulfurococcus kamchatkensis)).